The primary structure comprises 190 residues: dTTP/UTP pyrophosphatase (190 aa).

D71 functions as the Proton acceptor in the catalytic mechanism.

This sequence belongs to the Maf family. YhdE subfamily. It depends on a divalent metal cation as a cofactor.

It localises to the cytoplasm. It catalyses the reaction dTTP + H2O = dTMP + diphosphate + H(+). The enzyme catalyses UTP + H2O = UMP + diphosphate + H(+). Functionally, nucleoside triphosphate pyrophosphatase that hydrolyzes dTTP and UTP. May have a dual role in cell division arrest and in preventing the incorporation of modified nucleotides into cellular nucleic acids. The protein is dTTP/UTP pyrophosphatase of Xanthomonas euvesicatoria pv. vesicatoria (strain 85-10) (Xanthomonas campestris pv. vesicatoria).